A 217-amino-acid polypeptide reads, in one-letter code: Adenylate kinase (217 aa).

Residue 10 to 15 participates in ATP binding; that stretch reads GAGKGT. An NMP region spans residues 30-59; it reads STGDIFRAAMKNETPMGIEAKKYIDKGELV. Residues T31, R36, 57–59, 85–88, and Q92 each bind AMP; these read ELV and GFPR. The tract at residues 126-164 is LID; it reads GRFICRNCGATYHKLYNAPKVEGTCDVCGHHEFYQRDDD. R127 contacts ATP. Zn(2+)-binding residues include C130 and C133. 136–137 serves as a coordination point for ATP; it reads TY. Zn(2+)-binding residues include C150 and C153. AMP-binding residues include R161 and R172. Residue Q200 coordinates ATP.

It belongs to the adenylate kinase family. Monomer.

The protein resides in the cytoplasm. The enzyme catalyses AMP + ATP = 2 ADP. The protein operates within purine metabolism; AMP biosynthesis via salvage pathway; AMP from ADP: step 1/1. Functionally, catalyzes the reversible transfer of the terminal phosphate group between ATP and AMP. Plays an important role in cellular energy homeostasis and in adenine nucleotide metabolism. The chain is Adenylate kinase from Limosilactobacillus reuteri subsp. reuteri (strain JCM 1112) (Lactobacillus reuteri).